A 601-amino-acid chain; its full sequence is Elongation factor 4 (601 aa).

Residues 6 to 188 (QFIRNFSIIA…AITKEIPAPK (183 aa)) form the tr-type G domain. Residues 18 to 23 (DHGKST) and 135 to 138 (NKID) each bind GTP.

This sequence belongs to the TRAFAC class translation factor GTPase superfamily. Classic translation factor GTPase family. LepA subfamily.

The protein resides in the cell inner membrane. It carries out the reaction GTP + H2O = GDP + phosphate + H(+). Its function is as follows. Required for accurate and efficient protein synthesis under certain stress conditions. May act as a fidelity factor of the translation reaction, by catalyzing a one-codon backward translocation of tRNAs on improperly translocated ribosomes. Back-translocation proceeds from a post-translocation (POST) complex to a pre-translocation (PRE) complex, thus giving elongation factor G a second chance to translocate the tRNAs correctly. Binds to ribosomes in a GTP-dependent manner. The polypeptide is Elongation factor 4 (Leptospira borgpetersenii serovar Hardjo-bovis (strain JB197)).